Reading from the N-terminus, the 244-residue chain is Small ribosomal subunit protein uS2 (244 aa).

The protein belongs to the universal ribosomal protein uS2 family.

This is Small ribosomal subunit protein uS2 from Psychromonas ingrahamii (strain DSM 17664 / CCUG 51855 / 37).